A 555-amino-acid chain; its full sequence is Formate--tetrahydrofolate ligase (555 aa).

ATP is bound at residue 65–72 (TPAGEGKT).

Belongs to the formate--tetrahydrofolate ligase family.

It carries out the reaction (6S)-5,6,7,8-tetrahydrofolate + formate + ATP = (6R)-10-formyltetrahydrofolate + ADP + phosphate. Its pathway is one-carbon metabolism; tetrahydrofolate interconversion. The chain is Formate--tetrahydrofolate ligase from Thermoanaerobacter sp. (strain X514).